The following is a 358-amino-acid chain: Protein SRG1 (358 aa).

The Fe2OG dioxygenase domain occupies 209 to 309 (SVQSMRMNYY…RLSIATFHNV (101 aa)). Residues His233, Asp235, and His290 each contribute to the Fe cation site.

This sequence belongs to the iron/ascorbate-dependent oxidoreductase family. Low expression in roots and leaves.

The protein is Protein SRG1 (SRG1) of Arabidopsis thaliana (Mouse-ear cress).